A 321-amino-acid polypeptide reads, in one-letter code: Phospho-N-acetylmuramoyl-pentapeptide-transferase (321 aa).

10 helical membrane passes run 6 to 26 (ALIP…LFIG), 50 to 70 (GTPT…GIWV), 82 to 102 (LFIL…DDFI), 118 to 138 (LLGQ…EGYP), 143 to 163 (FFGI…FWLV), 175 to 195 (IDGL…IIAW), 200 to 220 (YDVL…FAYN), 226 to 246 (IFMG…ISIM), 251 to 271 (WTLL…MLQV), and 301 to 321 (IDII…WFIW).

It belongs to the glycosyltransferase 4 family. MraY subfamily. Requires Mg(2+) as cofactor.

Its subcellular location is the cell membrane. It catalyses the reaction UDP-N-acetyl-alpha-D-muramoyl-L-alanyl-gamma-D-glutamyl-L-lysyl-D-alanyl-D-alanine + di-trans,octa-cis-undecaprenyl phosphate = Mur2Ac(oyl-L-Ala-gamma-D-Glu-L-Lys-D-Ala-D-Ala)-di-trans,octa-cis-undecaprenyl diphosphate + UMP. The protein operates within cell wall biogenesis; peptidoglycan biosynthesis. Functionally, catalyzes the initial step of the lipid cycle reactions in the biosynthesis of the cell wall peptidoglycan: transfers peptidoglycan precursor phospho-MurNAc-pentapeptide from UDP-MurNAc-pentapeptide onto the lipid carrier undecaprenyl phosphate, yielding undecaprenyl-pyrophosphoryl-MurNAc-pentapeptide, known as lipid I. The sequence is that of Phospho-N-acetylmuramoyl-pentapeptide-transferase from Enterococcus hirae.